The sequence spans 560 residues: Diphtheria toxin homolog CRM228 (560 aa).

The signal sequence occupies residues 1–25 (MSRKLFASILIGALLGIGAPPSAHA). Residues histidine 46 and tyrosine 90 each contribute to the NAD(+) site. Glutamate 173 is an active-site residue. 2 disulfides stabilise this stretch: cysteine 211–cysteine 226 and cysteine 486–cysteine 496.

The polypeptide is Diphtheria toxin homolog CRM228 (Corynebacterium diphtheriae).